The following is a 338-amino-acid chain: Heat-inducible transcription repressor HrcA (338 aa).

This sequence belongs to the HrcA family.

Negative regulator of class I heat shock genes (grpE-dnaK-dnaJ and groELS operons). Prevents heat-shock induction of these operons. The polypeptide is Heat-inducible transcription repressor HrcA (Polaromonas sp. (strain JS666 / ATCC BAA-500)).